A 97-amino-acid polypeptide reads, in one-letter code: Coiled-coil domain-containing protein 167 (97 aa).

A coiled-coil region spans residues 2 to 78 (TKKKRENLGV…LLRHENRKNT (77 aa)). Residues 78–95 (TLLSVAIFTVFALLYAYW) form a helical membrane-spanning segment.

The protein resides in the membrane. The sequence is that of Coiled-coil domain-containing protein 167 (Ccdc167) from Mus musculus (Mouse).